A 501-amino-acid polypeptide reads, in one-letter code: MIWSSDSCFKSRKHQCLIFLKLCSSIKHLLQIHGQIHLSSLQNDSFIISELVRVSSLSLAKDLAFARTLLLHSSDSTPSTWNMLSRGYSSSDSPVESIWVYSEMKRRGIKPNKLTFPFLLKACASFLGLTAGRQIQVEVLKHGFDFDVYVGNNLIHLYGTCKKTSDARKVFDEMTERNVVSWNSIMTALVENGKLNLVFECFCEMIGKRFCPDETTMVVLLSACGGNLSLGKLVHSQVMVRELELNCRLGTALVDMYAKSGGLEYARLVFERMVDKNVWTWSAMIVGLAQYGFAEEALQLFSKMMKESSVRPNYVTFLGVLCACSHTGLVDDGYKYFHEMEKIHKIKPMMIHYGAMVDILGRAGRLNEAYDFIKKMPFEPDAVVWRTLLSACSIHHDEDDEGIGEKVKKRLIELEPKRSGNLVIVANRFAEARMWAEAAEVRRVMKETKMKKIAGESCLELGGSFHRFFSGYDPRSEYVSIYELLDLFKFQLTCDYRLVSE.

PPR repeat units lie at residues 77-111, 112-146, 147-177, 178-212, 213-243, 246-276, 277-312, 313-343, and 349-379; these read TPST…GIKP, NKLT…GFDF, DVYV…MTER, NVVS…RFCP, DETT…VREL, NCRL…MVDK, NVWT…SVRP, NYVT…MEKI, and MMIH…MPFE. Positions 384–462 are type E motif; sequence VWRTLLSACS…IAGESCLELG (79 aa). A type E(+) motif region spans residues 463-493; sequence GSFHRFFSGYDPRSEYVSIYELLDLFKFQLT.

This sequence belongs to the PPR family. PCMP-E subfamily.

This chain is Pentatricopeptide repeat-containing protein At2g36730 (PCMP-E44), found in Arabidopsis thaliana (Mouse-ear cress).